A 335-amino-acid polypeptide reads, in one-letter code: Dolichyl-diphosphooligosaccharide--protein glycosyltransferase subunit MAGT1 (335 aa).

The signal sequence occupies residues 1–29 (MASPRWFWSVCAIAAVALLLVSKVPSASA). Residues 30 to 184 (QRKKEMVLSE…DVNIRVIRPP (155 aa)) lie on the Extracellular side of the membrane. One can recognise a Thioredoxin domain in the interval 47–175 (WANKRPVIRM…IARWIADRTD (129 aa)). The N-linked (GlcNAc...) asparagine glycan is linked to Asn71. Cysteines 87 and 90 form a disulfide. Residues 185-205 (NYAGPLMLGLLLAVIGGLVYL) traverse the membrane as a helical segment. At 206-209 (RRSN) the chain is on the cytoplasmic side. Residues 210–230 (MEFLFNKTGWAFAALCFVLAM) form a helical membrane-spanning segment. Residues 231-270 (TSGQMWNHIRGPPYAHKNPHTGHVNYIHGSSQAQFVAETH) lie on the Extracellular side of the membrane. Residues 271–291 (IVLLFNGGVTLGMVLLCEAAT) traverse the membrane as a helical segment. Topologically, residues 292 to 300 (SDMDIGKRR) are cytoplasmic. Residues 301–321 (MMCIAGIGLVVLFFSWMLSIF) form a helical membrane-spanning segment. Over 322-335 (RSKYHGYPYSFLMS) the chain is Extracellular.

Belongs to the OST3/OST6 family. In terms of assembly, accessory component of the STT3B-containing form of the oligosaccharyltransferase (OST) complex. OST exists in two different complex forms which contain common core subunits RPN1, RPN2, OST48, OST4, DAD1 and TMEM258, either STT3A or STT3B as catalytic subunits, and form-specific accessory subunits. OST can form stable complexes with the Sec61 complex or with both the Sec61 and TRAP complexes. The association of TUSC3 or MAGT1 with the STT3B-containing complex seems to be mutually exclusvice. In terms of tissue distribution, expressed at high levels in kidney, colon, heart and liver. Expressed at lower levels in intestine, spleen, brain and lung.

Its subcellular location is the cell membrane. It localises to the endoplasmic reticulum. The protein localises to the endoplasmic reticulum membrane. The protein operates within protein modification; protein glycosylation. Accessory component of the STT3B-containing form of the N-oligosaccharyl transferase (OST) complex which catalyzes the transfer of a high mannose oligosaccharide from a lipid-linked oligosaccharide donor to an asparagine residue within an Asn-X-Ser/Thr consensus motif in nascent polypeptide chains. Involved in N-glycosylation of STT3B-dependent substrates. Specifically required for the glycosylation of a subset of acceptor sites that are near cysteine residues; in this function seems to act redundantly with TUSC3. In its oxidized form proposed to form transient mixed disulfides with a glycoprotein substrate to facilitate access of STT3B to the unmodified acceptor site. Also has oxidoreductase-independent functions in the STT3B-containing OST complex possibly involving substrate recognition. Could indirectly play a role in Mg(2+) transport in epithelial cells. The polypeptide is Dolichyl-diphosphooligosaccharide--protein glycosyltransferase subunit MAGT1 (Mus musculus (Mouse)).